Reading from the N-terminus, the 458-residue chain is ATP synthase subunit beta (458 aa).

Gly148–Thr155 provides a ligand contact to ATP.

The protein belongs to the ATPase alpha/beta chains family. In terms of assembly, F-type ATPases have 2 components, CF(1) - the catalytic core - and CF(0) - the membrane proton channel. CF(1) has five subunits: alpha(3), beta(3), gamma(1), delta(1), epsilon(1). CF(0) has three main subunits: a(1), b(2) and c(9-12). The alpha and beta chains form an alternating ring which encloses part of the gamma chain. CF(1) is attached to CF(0) by a central stalk formed by the gamma and epsilon chains, while a peripheral stalk is formed by the delta and b chains.

Its subcellular location is the cell inner membrane. The catalysed reaction is ATP + H2O + 4 H(+)(in) = ADP + phosphate + 5 H(+)(out). Its function is as follows. Produces ATP from ADP in the presence of a proton gradient across the membrane. The catalytic sites are hosted primarily by the beta subunits. The chain is ATP synthase subunit beta from Francisella tularensis subsp. tularensis (strain FSC 198).